Here is a 360-residue protein sequence, read N- to C-terminus: Phospho-N-acetylmuramoyl-pentapeptide-transferase (360 aa).

10 consecutive transmembrane segments (helical) span residues 27-47 (GAVM…IEWL), 73-93 (TMGG…WADL), 98-118 (VWAV…DDYL), 134-154 (LVAQ…LGQG), 168-188 (LTFN…VGAS), 199-219 (GLAI…AYLV), 239-259 (LAVF…FNAP), 263-283 (VFMG…VSVV), 288-308 (IVLA…IVQV), and 337-357 (TVVI…LSTL).

Belongs to the glycosyltransferase 4 family. MraY subfamily. The cofactor is Mg(2+).

It localises to the cell inner membrane. The catalysed reaction is UDP-N-acetyl-alpha-D-muramoyl-L-alanyl-gamma-D-glutamyl-meso-2,6-diaminopimeloyl-D-alanyl-D-alanine + di-trans,octa-cis-undecaprenyl phosphate = di-trans,octa-cis-undecaprenyl diphospho-N-acetyl-alpha-D-muramoyl-L-alanyl-D-glutamyl-meso-2,6-diaminopimeloyl-D-alanyl-D-alanine + UMP. It participates in cell wall biogenesis; peptidoglycan biosynthesis. Functionally, catalyzes the initial step of the lipid cycle reactions in the biosynthesis of the cell wall peptidoglycan: transfers peptidoglycan precursor phospho-MurNAc-pentapeptide from UDP-MurNAc-pentapeptide onto the lipid carrier undecaprenyl phosphate, yielding undecaprenyl-pyrophosphoryl-MurNAc-pentapeptide, known as lipid I. This chain is Phospho-N-acetylmuramoyl-pentapeptide-transferase, found in Rhodospirillum rubrum (strain ATCC 11170 / ATH 1.1.1 / DSM 467 / LMG 4362 / NCIMB 8255 / S1).